A 64-amino-acid chain; its full sequence is Small, acid-soluble spore protein H (64 aa).

Belongs to the SspH family.

The protein localises to the spore core. The polypeptide is Small, acid-soluble spore protein H (Acetivibrio thermocellus (strain ATCC 27405 / DSM 1237 / JCM 9322 / NBRC 103400 / NCIMB 10682 / NRRL B-4536 / VPI 7372) (Clostridium thermocellum)).